A 460-amino-acid polypeptide reads, in one-letter code: Wadjet protein JetA (460 aa).

Functionally, component of antiplasmid transformation system Wadjet type I, composed of JetA, JetB, JetC and JetD. Expression of Wadjet type I in B.subtilis (strain BEST7003) reduces the transformation efficiency of plasmid pHCMC05. The sequence is that of Wadjet protein JetA from Bacillus cereus (strain Q1).